Reading from the N-terminus, the 185-residue chain is Alpha-S1-casein (185 aa).

Residues 1-15 form the signal peptide; sequence MRLLILTCLVAVALA. A phosphoserine mark is found at Ser31, Ser33, Ser41, Ser71, Ser85, Ser86, Ser88, Ser89, Ser90, and Ser91.

It belongs to the alpha-casein family. As to quaternary structure, heteromultimers of alpha-s1 casein and kappa-casein; disulfide-linked. Not glycosylated. Mammary gland specific. Secreted in milk.

The protein resides in the secreted. In terms of biological role, important role in the capacity of milk to transport calcium phosphate. Functionally, casoxin D acts as opioid antagonist and has vasorelaxing activity mediated by bradykinin B1 receptors. In Homo sapiens (Human), this protein is Alpha-S1-casein (CSN1S1).